The sequence spans 129 residues: Small ribosomal subunit protein uS11 (129 aa).

It belongs to the universal ribosomal protein uS11 family. In terms of assembly, part of the 30S ribosomal subunit. Interacts with proteins S7 and S18. Binds to IF-3.

Located on the platform of the 30S subunit, it bridges several disparate RNA helices of the 16S rRNA. Forms part of the Shine-Dalgarno cleft in the 70S ribosome. This is Small ribosomal subunit protein uS11 from Desulfovibrio desulfuricans (strain ATCC 27774 / DSM 6949 / MB).